A 473-amino-acid chain; its full sequence is Ribosomal RNA small subunit methyltransferase F (473 aa).

S-adenosyl-L-methionine is bound by residues 124–130, E148, D175, and D193; that span reads ASAPGSK. C246 serves as the catalytic Nucleophile.

This sequence belongs to the class I-like SAM-binding methyltransferase superfamily. RsmB/NOP family.

Its subcellular location is the cytoplasm. The catalysed reaction is cytidine(1407) in 16S rRNA + S-adenosyl-L-methionine = 5-methylcytidine(1407) in 16S rRNA + S-adenosyl-L-homocysteine + H(+). Its function is as follows. Specifically methylates the cytosine at position 1407 (m5C1407) of 16S rRNA. This chain is Ribosomal RNA small subunit methyltransferase F, found in Aliivibrio fischeri (strain MJ11) (Vibrio fischeri).